Consider the following 24-residue polypeptide: FLPAIVGAAGKFLPKIFCAISKKC.

The cysteines at positions 18 and 24 are disulfide-linked.

Expressed by the skin glands.

It is found in the secreted. Antibacterial activity against Gram-negative bacterium E.coli. The protein is Brevinin-1Sb of Lithobates sphenocephalus (Southern leopard frog).